Here is a 94-residue protein sequence, read N- to C-terminus: 2S albumin-like cysteine protease inhibitor (94 aa).

3 disulfides stabilise this stretch: Cys12-Cys35, Cys36-Cys82, and Cys48-Cys89.

This sequence belongs to the 2S seed storage albumins family. Expressed in seeds (at protein level).

Its function is as follows. Cysteine protease inhibitor that likely functions in defense against insects by inhibiting cysteine proteases in the midgut of herbivore insects such as C.maculatus. Selectively inhibits cathepsin L, as well as papain, ficin and bromelain with lower efficiency. Shows antitumor activity, inhibiting the growth of prostate cancer cell lines PC3 and DU145, and the gastric cancer cell line Hs746T. No activity against cathepsin B or serine proteases (trypsin, human plasma kallikrein and elastase). The polypeptide is 2S albumin-like cysteine protease inhibitor (Araucaria angustifolia (Brazilian pine tree)).